A 1396-amino-acid polypeptide reads, in one-letter code: Sterol 3-beta-glucosyltransferase (1396 aa).

The segment covering 1–16 has biased composition (basic and acidic residues); sequence MRPFIDDAKRRAERRL. Disordered stretches follow at residues 1 to 21, 40 to 64, 83 to 196, and 209 to 232; these read MRPF…ASRQ, DADD…MQYM, ARFD…RAAP, and ETEN…KKSQ. Residues 94–107 show a composition bias toward basic and acidic residues; sequence ETRTRPRFLSEKPF. Residues 186 to 196 show a composition bias toward low complexity; that stretch reads RPRSATPRAAP. Residues 238-273 form the GRAM 1 domain; it reads RQLMEMFRFPTPEKVVVEYACSLLQSMLLQGYMYVT. The 100-residue stretch at 289–388 folds into the PH domain; the sequence is RVIKSGYIYK…WVRALQKVIF (100 aa). 2 disordered regions span residues 460 to 532 and 571 to 627; these read GTPT…SSSS and TIHT…ESKD. Composition is skewed to polar residues over residues 484–532 and 571–584; these read GSQN…SSSS and TIHT…GTAR. The span at 588–602 shows a compositional bias: basic and acidic residues; the sequence is RHSDEITRSTTEHGL. Positions 717 to 783 constitute a GRAM 2 domain; it reads ERFRAHFALP…HDIENVEKEK (67 aa). Residues S905, R906, D908, A1208, H1210, H1223, G1227, T1228, D1247, and Q1248 each coordinate UDP-alpha-D-glucose. The span at 1324-1343 shows a compositional bias: low complexity; sequence SSISSTPFSPTPSTKTSDDQ. Residues 1324–1346 are disordered; that stretch reads SSISSTPFSPTPSTKTSDDQNAN.

This sequence belongs to the glycosyltransferase 28 family.

The protein localises to the cytoplasm. It localises to the preautophagosomal structure membrane. It carries out the reaction a sterol + UDP-alpha-D-glucose = a sterol 3-beta-D-glucoside + UDP + H(+). The catalysed reaction is ergosterol + UDP-alpha-D-glucose = ergosteryl 3-beta-D-glucoside + UDP + H(+). Sterol glycosyltransferase responsible for the glycosylation of ergosterol to form ergosterol-glucoside. The protein is Sterol 3-beta-glucosyltransferase of Emericella nidulans (strain FGSC A4 / ATCC 38163 / CBS 112.46 / NRRL 194 / M139) (Aspergillus nidulans).